Here is a 357-residue protein sequence, read N- to C-terminus: Dual-specificity RNA methyltransferase RlmN (357 aa).

Catalysis depends on glutamate 89, which acts as the Proton acceptor. Residues 109–340 form the Radical SAM core domain; the sequence is EREKYTVCVS…CTIRESKALD (232 aa). Residues cysteine 116 and cysteine 345 are joined by a disulfide bond. The [4Fe-4S] cluster site is built by cysteine 123, cysteine 127, and cysteine 130. Residues 173–174, serine 203, 226–228, and asparagine 302 contribute to the S-adenosyl-L-methionine site; these read GE and SLH. Residue cysteine 345 is the S-methylcysteine intermediate of the active site.

Belongs to the radical SAM superfamily. RlmN family. The cofactor is [4Fe-4S] cluster.

The protein resides in the cytoplasm. The enzyme catalyses adenosine(2503) in 23S rRNA + 2 reduced [2Fe-2S]-[ferredoxin] + 2 S-adenosyl-L-methionine = 2-methyladenosine(2503) in 23S rRNA + 5'-deoxyadenosine + L-methionine + 2 oxidized [2Fe-2S]-[ferredoxin] + S-adenosyl-L-homocysteine. It carries out the reaction adenosine(37) in tRNA + 2 reduced [2Fe-2S]-[ferredoxin] + 2 S-adenosyl-L-methionine = 2-methyladenosine(37) in tRNA + 5'-deoxyadenosine + L-methionine + 2 oxidized [2Fe-2S]-[ferredoxin] + S-adenosyl-L-homocysteine. Specifically methylates position 2 of adenine 2503 in 23S rRNA and position 2 of adenine 37 in tRNAs. m2A2503 modification seems to play a crucial role in the proofreading step occurring at the peptidyl transferase center and thus would serve to optimize ribosomal fidelity. The sequence is that of Dual-specificity RNA methyltransferase RlmN from Helicobacter pylori (strain ATCC 700392 / 26695) (Campylobacter pylori).